Here is a 201-residue protein sequence, read N- to C-terminus: Large ribosomal subunit protein eL15B (201 aa).

The segment at 161–182 (SRGLTSIGKKSRGIGKGHRYNN) is disordered. Residues 169 to 179 (KKSRGIGKGHR) show a composition bias toward basic residues. The residue at position 183 (serine 183) is a Phosphoserine.

It belongs to the eukaryotic ribosomal protein eL15 family. Component of the large ribosomal subunit (LSU). Mature yeast ribosomes consist of a small (40S) and a large (60S) subunit. The 40S small subunit contains 1 molecule of ribosomal RNA (18S rRNA) and at least 33 different proteins. The large 60S subunit contains 3 rRNA molecules (25S, 5.8S and 5S rRNA) and at least 46 different proteins.

It is found in the cytoplasm. It localises to the nucleus. The protein resides in the nucleolus. Functionally, component of the ribosome, a large ribonucleoprotein complex responsible for the synthesis of proteins in the cell. The small ribosomal subunit (SSU) binds messenger RNAs (mRNAs) and translates the encoded message by selecting cognate aminoacyl-transfer RNA (tRNA) molecules. The large subunit (LSU) contains the ribosomal catalytic site termed the peptidyl transferase center (PTC), which catalyzes the formation of peptide bonds, thereby polymerizing the amino acids delivered by tRNAs into a polypeptide chain. The nascent polypeptides leave the ribosome through a tunnel in the LSU and interact with protein factors that function in enzymatic processing, targeting, and the membrane insertion of nascent chains at the exit of the ribosomal tunnel. The polypeptide is Large ribosomal subunit protein eL15B (rpl1502) (Schizosaccharomyces pombe (strain 972 / ATCC 24843) (Fission yeast)).